Consider the following 2486-residue polypeptide: Nonribosomal peptide synthetase nanA (2486 aa).

An adenylation 1 region spans residues 231–637; it reads FSARQPLSPA…GRRGTQVKLR (407 aa). The 75-residue stretch at 786–860 folds into the Carrier 1 domain; it reads TDIELKVHAL…DLARSAKETS (75 aa). An O-(pantetheine 4'-phosphoryl)serine modification is found at Ser820. The segment at 902–1314 is condensation 1; it reads EDAYPCTPLQ…LKSVPRVSSQ (413 aa). Positions 1339-1735 are adenylation 2; that stretch reads RAQARKTPLA…GRIGDQMKIR (397 aa). Carrier domains are found at residues 1872–1948 and 2404–2480; these read PPST…SSAS and SSSE…QTQA. Ser1909 and Ser2441 each carry O-(pantetheine 4'-phosphoryl)serine. The segment at 2404 to 2480 is condensation 2; the sequence is SSSETIVEPL…KLARLLQTQA (77 aa).

This sequence belongs to the NRP synthetase family.

The protein operates within secondary metabolite biosynthesis. Nonribosomal peptide synthetase; part of the gene cluster that mediates the biosynthesis of the benzazepine alkaloid nanangelenin A which contains an unprecedented 3,4-dihydro-1-benzazepine-2,5-dione-N-prenyl-N-acetoxy-anthranilamide scaffold. The first step of nanangelenin biosynthesis is catalyzed by the indoleamine 2,3-dioxygenase nanC which produces N-formyl-kynurenine through the catabolism of tryptophan. The two-module NRPS nanA then utilizes anthranilate (Ant) and L-kynurenine (L-Kyn) to assemble the dipeptide product nanangelenin B. The first adenylation domain of nanA (A1) loads anthranilate onto the T1 domain, while A2 loads kynurenine, generated through spontaneous nonenzymatic deformylation of the nanC-supplied N-formyl-kynurenine. The peptide bond formation between the tethered amino acids is catalyzed by the first condensation domain (C1) between anthranilate's carbonyl carbon and kynurenine's aliphatic primary amine. The second C domain (C2) catalyzes the final cyclization event between the aromatic amine of kynurenine and the tethered carbonyl carbon, yielding nanangelenin B. The terminal T3 domain enhances the catalytic efficiency of C2, suggesting the T2-tethered Ant-L-Kyn is transferred to T3 prior to cyclization by C2. Once released from nanA, nanangelenin B is then prenylated by the prenyltransferase nanD to form nanangelenin C. Nanangelenin C is then N-hydroxylated by the FAD-dependent monooxygenase nanF and further acetylated by the acetyltransferase nanB to yield nanangelenin F. Finally, the N-methyltransferase nanE methylates the amide nitrogen of 1-benzazepine to convert nanangelenin F into nanangelenin A. NanE is also able to methylate most of the intermediates of the pathway such as nanangelenin B and nanangelenin C to produce nanangelenin D and nanangelenin E, respectively. In Aspergillus nanangensis, this protein is Nonribosomal peptide synthetase nanA.